A 279-amino-acid polypeptide reads, in one-letter code: Undecaprenyl-diphosphatase (279 aa).

A run of 8 helical transmembrane segments spans residues 2–22 (LIIE…TEWL), 44–64 (AFIE…VMLI), 85–105 (WQLW…AVPL), 113–133 (FYFM…FIWI), 163–183 (VLSI…AIIL), 188–208 (TVAA…YSGL), 223–243 (AQVL…LLAI), and 255–275 (FTIF…YSFF).

This sequence belongs to the UppP family.

It localises to the cell membrane. It carries out the reaction di-trans,octa-cis-undecaprenyl diphosphate + H2O = di-trans,octa-cis-undecaprenyl phosphate + phosphate + H(+). Its function is as follows. Catalyzes the dephosphorylation of undecaprenyl diphosphate (UPP). Confers resistance to bacitracin. This chain is Undecaprenyl-diphosphatase, found in Streptococcus pyogenes serotype M5 (strain Manfredo).